The chain runs to 174 residues: Protein GrpE (174 aa).

The protein belongs to the GrpE family. As to quaternary structure, homodimer.

It localises to the cytoplasm. Participates actively in the response to hyperosmotic and heat shock by preventing the aggregation of stress-denatured proteins, in association with DnaK and GrpE. It is the nucleotide exchange factor for DnaK and may function as a thermosensor. Unfolded proteins bind initially to DnaJ; upon interaction with the DnaJ-bound protein, DnaK hydrolyzes its bound ATP, resulting in the formation of a stable complex. GrpE releases ADP from DnaK; ATP binding to DnaK triggers the release of the substrate protein, thus completing the reaction cycle. Several rounds of ATP-dependent interactions between DnaJ, DnaK and GrpE are required for fully efficient folding. The protein is Protein GrpE of Pseudothermotoga lettingae (strain ATCC BAA-301 / DSM 14385 / NBRC 107922 / TMO) (Thermotoga lettingae).